We begin with the raw amino-acid sequence, 359 residues long: S-adenosylmethionine-dependent nucleotide dehydratase RSAD2 (359 aa).

Residues 43–67 (QTPARKISRPESRTSKQKEGSRAPF) form a disordered region. Basic and acidic residues predominate over residues 50–63 (SRPESRTSKQKEGS). One can recognise a Radical SAM core domain in the interval 67–287 (FTTPSSVNYH…LERHQSIQCL (221 aa)). The [4Fe-4S] cluster site is built by cysteine 81, cysteine 85, and cysteine 88.

It belongs to the radical SAM superfamily. RSAD2 family. The cofactor is [4Fe-4S] cluster.

It localises to the endoplasmic reticulum membrane. Interferon-inducible iron-sulfur (4FE-4S) cluster-binding antiviral protein which plays a major role in the cell antiviral state induced by type I and type II interferon. The polypeptide is S-adenosylmethionine-dependent nucleotide dehydratase RSAD2 (Danio rerio (Zebrafish)).